The primary structure comprises 417 residues: Phosphoglycerate kinase (417 aa).

(2R)-3-phosphoglycerate-binding residues include Val-23, Asp-24, Phe-25, Asn-26, Gln-38, Arg-39, Ser-62, His-63, Gly-65, Arg-66, Leu-121, Arg-122, His-169, and Arg-170. Gly-213 contributes to the ADP binding site. Residue Gly-213 coordinates CDP. AMP is bound by residues Ala-214 and Lys-215. Ala-214 provides a ligand contact to ATP. Residue Ala-214 coordinates Mg(2+). Residue Asp-218 coordinates CDP. A Mg(2+)-binding site is contributed by Asp-218. Lys-219 contributes to the AMP binding site. Position 219 (Lys-219) interacts with ATP. Gly-237 is an ADP binding site. Position 237 (Gly-237) interacts with CDP. Residues Gly-238 and Gly-312 each contribute to the AMP site. 2 residues coordinate ATP: Gly-238 and Gly-312. Gly-337 and Phe-342 together coordinate CDP. ADP is bound at residue Phe-342. Glu-343 contributes to the AMP binding site. ATP-binding residues include Glu-343, Asp-374, and Thr-375. Asp-374 contributes to the Mg(2+) binding site.

This sequence belongs to the phosphoglycerate kinase family. In terms of assembly, monomer. Mg(2+) is required as a cofactor.

Its subcellular location is the cytoplasm. The protein localises to the mitochondrion. It carries out the reaction (2R)-3-phosphoglycerate + ATP = (2R)-3-phospho-glyceroyl phosphate + ADP. Its pathway is carbohydrate degradation; glycolysis; pyruvate from D-glyceraldehyde 3-phosphate: step 2/5. Its function is as follows. Catalyzes one of the two ATP producing reactions in the glycolytic pathway via the reversible conversion of 1,3-diphosphoglycerate to 3-phosphoglycerate. Both L- and D- forms of purine and pyrimidine nucleotides can be used as substrates, but the activity is much lower on pyrimidines. Negatively regulates the biosynthesis of acetyl-CoA from pyruvate in the mitochondrion. The chain is Phosphoglycerate kinase (PGK1) from Yarrowia lipolytica (strain CLIB 122 / E 150) (Yeast).